The primary structure comprises 273 residues: DnaJ homolog subfamily C member 27 (273 aa).

Residues 1 to 18 (MEASMPKRKEPGKSLRIK) are required for interaction with MAPK1. GTP-binding positions include 23–30 (GNAEVGKS), 71–75 (DMAGD), and 134–137 (NKID). The 57-residue stretch at 217–273 (DSWDMLGVKPGASRDEVNKAYRKLAVLLHPDKCVAPGSEDAFKAVVNARTALLKNIK) folds into the J domain.

This sequence belongs to the small GTPase superfamily. Rab family. As to quaternary structure, interacts directly with MAPK1 (wild-type and kinase-deficient forms). Interacts directly (in GTP-bound form) with MAP2K1 (wild-type and kinase-deficient forms).

The protein localises to the nucleus. Its function is as follows. GTPase which can activate the MEK/ERK pathway and induce cell transformation when overexpressed. May act as a nuclear scaffold for MAPK1, probably by association with MAPK1 nuclear export signal leading to enhanced ERK1/ERK2 signaling. This Bos taurus (Bovine) protein is DnaJ homolog subfamily C member 27 (DNAJC27).